The sequence spans 371 residues: Capsular polysaccharide phosphotransferase cps12A (371 aa).

The protein belongs to the stealth family.

Functionally, part of a capsular polysaccharide synthesis locus. The sequence is that of Capsular polysaccharide phosphotransferase cps12A (cps12A) from Actinobacillus pleuropneumoniae (Haemophilus pleuropneumoniae).